We begin with the raw amino-acid sequence, 595 residues long: Aspartate--tRNA(Asp/Asn) ligase (595 aa).

E171 provides a ligand contact to L-aspartate. Residues 195–198 (QLFK) form an aspartate region. Position 217 (R217) interacts with L-aspartate. Residues 217–219 (RDE) and Q226 contribute to the ATP site. An L-aspartate-binding site is contributed by H454. ATP is bound at residue E488. R495 serves as a coordination point for L-aspartate. 540–543 (GLDR) contributes to the ATP binding site.

The protein belongs to the class-II aminoacyl-tRNA synthetase family. Type 1 subfamily. Homodimer.

It localises to the cytoplasm. The catalysed reaction is tRNA(Asx) + L-aspartate + ATP = L-aspartyl-tRNA(Asx) + AMP + diphosphate. Its function is as follows. Aspartyl-tRNA synthetase with relaxed tRNA specificity since it is able to aspartylate not only its cognate tRNA(Asp) but also tRNA(Asn). Reaction proceeds in two steps: L-aspartate is first activated by ATP to form Asp-AMP and then transferred to the acceptor end of tRNA(Asp/Asn). The sequence is that of Aspartate--tRNA(Asp/Asn) ligase from Bordetella petrii (strain ATCC BAA-461 / DSM 12804 / CCUG 43448).